Reading from the N-terminus, the 149-residue chain is MQVILLDKIGNLGSLGDTVNVKSGYARNFLIPQGKAVMATKGNVEMFEARRAELEAKVAEQLASAEARAEKVNALEAVVIASKAGDEGKLFGSIGTRDIADAITAAGVEVVKSEVRLPEGALRTTGEFEISVQLHSEVFATVKLQVVAE.

This sequence belongs to the bacterial ribosomal protein bL9 family.

Functionally, binds to the 23S rRNA. The polypeptide is Large ribosomal subunit protein bL9 (Vibrio vulnificus (strain CMCP6)).